Here is a 2067-residue protein sequence, read N- to C-terminus: Negative regulator of mitosis (2067 aa).

Positions 100-118 (SLAIPQTTSQQSNRPSGSE) are enriched in polar residues. 3 disordered regions span residues 100-132 (SLAI…STSK), 332-408 (ESIP…DDFA), and 452-480 (GSQS…GFNP). The Nuclear localization signal signature appears at 336–347 (SHRKKKRRDTGG). Residues 336 to 355 (SHRKKKRRDTGGTRSKRRSS) are compositionally biased toward basic residues. The segment covering 384 to 396 (WNASVMSHSQYST) has biased composition (polar residues). PC repeat units follow at residues 1434 to 1465 (AGIM…ADQE), 1482 to 1520 (AAGF…TKNV), 1532 to 1562 (GATI…TVRF), and 1625 to 1659 (GLCF…ISRL). A disordered region spans residues 2020–2042 (FPSESDEEKRDRQETGSMPSSGH).

This sequence belongs to the APC1 family.

Functionally, negative regulator of mitosis in E.nidulans. This protein is part of a regulatory pathway that includes the nimA protein kinase. It is required to prevent premature entry into mitosis. Mutations to this protein both cause cells to enter mitosis and prevent them from leaving mitosis. The sequence is that of Negative regulator of mitosis (bimE) from Emericella nidulans (strain FGSC A4 / ATCC 38163 / CBS 112.46 / NRRL 194 / M139) (Aspergillus nidulans).